Here is a 549-residue protein sequence, read N- to C-terminus: Elongator complex protein 3 (549 aa).

The Radical SAM core domain maps to 84 to 374; the sequence is RTASGIAVVA…YRVQRDIPMP (291 aa). [4Fe-4S] cluster is bound by residues Cys-101, Cys-111, and Cys-114. Residues Lys-166, 476–479, 499–501, and Tyr-532 each bind acetyl-CoA; these read ELHV and FGM. In terms of domain architecture, N-acetyltransferase spans 398–549; that stretch reads TECRDVRTRE…EGPYMVKKLD (152 aa).

It belongs to the ELP3 family. As to quaternary structure, component of the elongator complex. Interacts with transcriptional repressors snai1 and snai2; interaction with snai1 inhibits its ubiquitination and stabilizes it. [4Fe-4S] cluster serves as cofactor.

The protein resides in the cytoplasm. It is found in the nucleus. The catalysed reaction is uridine(34) in tRNA + acetyl-CoA + S-adenosyl-L-methionine + H2O = 5-(carboxymethyl)uridine(34) in tRNA + 5'-deoxyadenosine + L-methionine + CoA + 2 H(+). It participates in tRNA modification; 5-methoxycarbonylmethyl-2-thiouridine-tRNA biosynthesis. In terms of biological role, catalytic tRNA acetyltransferase subunit of the elongator complex which is required for multiple tRNA modifications, including mcm5U (5-methoxycarbonylmethyl uridine), mcm5s2U (5-methoxycarbonylmethyl-2-thiouridine), and ncm5U (5-carbamoylmethyl uridine). In the elongator complex, acts as a tRNA uridine(34) acetyltransferase by mediating formation of carboxymethyluridine in the wobble base at position 34 in tRNAs. Stabilizes transcriptional repressor snai1 by inhibiting its ubiquitination which promotes neural crest cell migration. In Xenopus tropicalis (Western clawed frog), this protein is Elongator complex protein 3.